The primary structure comprises 666 residues: Long chain acyl-CoA synthetase 4 (666 aa).

An ATP-binding site is contributed by 228–239 (IMYTSGTTGDPK). The segment at 495 to 519 (DGWLHTGDVGEWQPDGSMKIIDRKK) is fatty acid-binding.

It belongs to the ATP-dependent AMP-binding enzyme family. Requires Mg(2+) as cofactor.

It catalyses the reaction a long-chain fatty acid + ATP + CoA = a long-chain fatty acyl-CoA + AMP + diphosphate. The protein operates within lipid metabolism; fatty acid metabolism. Functionally, activation of long-chain fatty acids for both synthesis of cellular lipids, and degradation via beta-oxidation. Preferentially uses palmitate, palmitoleate, oleate and linoleate. This is Long chain acyl-CoA synthetase 4 (LACS4) from Arabidopsis thaliana (Mouse-ear cress).